Reading from the N-terminus, the 598-residue chain is Jacalin-related lectin 17 (598 aa).

Positions 1-23 (MAQRLEAEGNKNFKGKSKWDDGS) are disordered. 4 consecutive Jacalin-type lectin domains span residues 2–148 (AQRL…YVTW), 151–293 (PTKL…YFTT), 295–445 (PFTK…HFCP), and 452–595 (GEKV…HVLP).

This sequence belongs to the jacalin lectin family.

In Arabidopsis thaliana (Mouse-ear cress), this protein is Jacalin-related lectin 17 (JAL17).